The primary structure comprises 452 residues: Phosphoglucosamine mutase (452 aa).

Residue Ser-97 is the Phosphoserine intermediate of the active site. Mg(2+) contacts are provided by Ser-97, Asp-236, Asp-238, and Asp-240. Ser-97 is modified (phosphoserine).

It belongs to the phosphohexose mutase family. It depends on Mg(2+) as a cofactor. In terms of processing, activated by phosphorylation.

The enzyme catalyses alpha-D-glucosamine 1-phosphate = D-glucosamine 6-phosphate. Catalyzes the conversion of glucosamine-6-phosphate to glucosamine-1-phosphate. This chain is Phosphoglucosamine mutase, found in Prochlorococcus marinus (strain MIT 9515).